A 286-amino-acid chain; its full sequence is Bifunctional protein FolD (286 aa).

NADP(+) is bound by residues 165-167 (GRS) and S190.

Belongs to the tetrahydrofolate dehydrogenase/cyclohydrolase family. As to quaternary structure, homodimer.

The catalysed reaction is (6R)-5,10-methylene-5,6,7,8-tetrahydrofolate + NADP(+) = (6R)-5,10-methenyltetrahydrofolate + NADPH. The enzyme catalyses (6R)-5,10-methenyltetrahydrofolate + H2O = (6R)-10-formyltetrahydrofolate + H(+). The protein operates within one-carbon metabolism; tetrahydrofolate interconversion. In terms of biological role, catalyzes the oxidation of 5,10-methylenetetrahydrofolate to 5,10-methenyltetrahydrofolate and then the hydrolysis of 5,10-methenyltetrahydrofolate to 10-formyltetrahydrofolate. This is Bifunctional protein FolD from Staphylococcus aureus (strain JH9).